A 37-amino-acid polypeptide reads, in one-letter code: MKVRASVKKICPECKVIRRKGVIRVICTNPKHKQRQR.

It belongs to the bacterial ribosomal protein bL36 family.

This Leptospira biflexa serovar Patoc (strain Patoc 1 / Ames) protein is Large ribosomal subunit protein bL36.